The following is a 93-amino-acid chain: Small ribosomal subunit protein bS18 (93 aa).

The span at 1–11 shows a compositional bias: basic residues; sequence MAPSARNRKPG. Positions 1–27 are disordered; the sequence is MAPSARNRKPGARSMAKAAALRKPKKK.

It belongs to the bacterial ribosomal protein bS18 family. In terms of assembly, part of the 30S ribosomal subunit. Forms a tight heterodimer with protein bS6.

Functionally, binds as a heterodimer with protein bS6 to the central domain of the 16S rRNA, where it helps stabilize the platform of the 30S subunit. The polypeptide is Small ribosomal subunit protein bS18 (Salinispora tropica (strain ATCC BAA-916 / DSM 44818 / JCM 13857 / NBRC 105044 / CNB-440)).